The primary structure comprises 505 residues: Lysine--tRNA ligase (505 aa).

Mg(2+) is bound by residues E415 and E422.

It belongs to the class-II aminoacyl-tRNA synthetase family. Homodimer. Requires Mg(2+) as cofactor.

It localises to the cytoplasm. It catalyses the reaction tRNA(Lys) + L-lysine + ATP = L-lysyl-tRNA(Lys) + AMP + diphosphate. The polypeptide is Lysine--tRNA ligase (Salmonella paratyphi C (strain RKS4594)).